We begin with the raw amino-acid sequence, 314 residues long: MASAAFEIDILLPSDLSPADLSALQKCEGKLVFLTALRRRVMLSSVTLSSYYVNGAPPDTLSLMAAFRRRFPAIIQRVLPNKMIAAALGVAPLPPGAFIQNTGPFDLCNGDSVCALPPILDVEDKLRLGSVGEEILFPLTVPLAQARELIARLVARAVQALTPNAQAQRGAEVMFYNGRKYNVTPDLRHRDAVNGVARSLVLNMIFAMNEGSLVLLSLIPNLLTLGTQDGFVNAIIQMGSATREVGQLVHQQPVPQPQDGARRFCVYDALMSWISVASRLGDVVGGKPLVRICTFEGQATISRGEKAPVIQTLL.

Belongs to the herpesviridae TRX2 protein family. Interacts with TRX1 and major capisd protein/MCP.

It is found in the virion. The protein localises to the host nucleus. In terms of biological role, structural component of the T=16 icosahedral capsid. The capsid is composed of pentamers and hexamers of major capsid protein/MCP, which are linked together by heterotrimers called triplexes. These triplexes are formed by a single molecule of triplex protein 1/TRX1 and two copies of triplex protein 2/TRX2. Additionally, TRX1 is required for efficient transport of TRX2 to the nucleus, which is the site of capsid assembly. This chain is Triplex capsid protein 2, found in Equine herpesvirus 1 (strain Ab4p) (EHV-1).